The following is a 203-amino-acid chain: Thymidylate kinase (203 aa).

7–14 (GGEGAGKT) contacts ATP.

It belongs to the thymidylate kinase family.

It carries out the reaction dTMP + ATP = dTDP + ADP. In terms of biological role, phosphorylation of dTMP to form dTDP in both de novo and salvage pathways of dTTP synthesis. The protein is Thymidylate kinase of Chlamydia trachomatis serovar L2 (strain ATCC VR-902B / DSM 19102 / 434/Bu).